The primary structure comprises 413 residues: 2,3-bisphosphoglycerate-independent phosphoglycerate mutase (413 aa).

Belongs to the BPG-independent phosphoglycerate mutase family. A-PGAM subfamily.

It catalyses the reaction (2R)-2-phosphoglycerate = (2R)-3-phosphoglycerate. Its pathway is carbohydrate degradation; glycolysis; pyruvate from D-glyceraldehyde 3-phosphate: step 3/5. Catalyzes the interconversion of 2-phosphoglycerate and 3-phosphoglycerate. The polypeptide is 2,3-bisphosphoglycerate-independent phosphoglycerate mutase (Sulfolobus acidocaldarius (strain ATCC 33909 / DSM 639 / JCM 8929 / NBRC 15157 / NCIMB 11770)).